We begin with the raw amino-acid sequence, 633 residues long: DNA topoisomerase 4 subunit B (633 aa).

ATP is bound by residues tyrosine 5, asparagine 45, aspartate 72, 113-119 (GLHGVGA), and lysine 337. One can recognise a Toprim domain in the interval 419–534 (KELFIVEGDS…LGHVYLALPP (116 aa)). Mg(2+) is bound by residues glutamate 425, aspartate 499, and aspartate 501.

This sequence belongs to the type II topoisomerase family. ParE type 2 subfamily. In terms of assembly, heterotetramer composed of ParC and ParE. It depends on Mg(2+) as a cofactor. The cofactor is Mn(2+). Requires Ca(2+) as cofactor.

The enzyme catalyses ATP-dependent breakage, passage and rejoining of double-stranded DNA.. Topoisomerase IV is essential for chromosome segregation. It relaxes supercoiled DNA. Performs the decatenation events required during the replication of a circular DNA molecule. This Mycoplasma genitalium (strain ATCC 33530 / DSM 19775 / NCTC 10195 / G37) (Mycoplasmoides genitalium) protein is DNA topoisomerase 4 subunit B.